Reading from the N-terminus, the 351-residue chain is MNPPKSAPDAQGLSYRDAGVDIDAGDALVDKIKPFAKKTLRDGVLGGIGGFGALFEVPKKYREPVLVSGTDGVGTKLKLAFHLNKHDTVGQDLVAMSVNDILVQGAEPLFFLDYFACGRLDVETAATVVKGIATGCELAGCALIGGETAEMPSMYPDGEYDLAGFAVGAVEKSKIIDGSTIAEGDVVLGLASSGIHSNGFSLVRKIIERANPDLSADFHGRSLADALMAPTRIYVKPLLALMEKIAVKGMAHITGGGLVENIPRVLRDGLTAELDQHAWPLPPLFQWLQQHGGVADAEMHRVFNCGIGMAVIVSAADADDALRQLADAGEQVWKIGTVRASREGEAQTVVV.

It belongs to the AIR synthase family.

The protein localises to the cytoplasm. It carries out the reaction 2-formamido-N(1)-(5-O-phospho-beta-D-ribosyl)acetamidine + ATP = 5-amino-1-(5-phospho-beta-D-ribosyl)imidazole + ADP + phosphate + H(+). It functions in the pathway purine metabolism; IMP biosynthesis via de novo pathway; 5-amino-1-(5-phospho-D-ribosyl)imidazole from N(2)-formyl-N(1)-(5-phospho-D-ribosyl)glycinamide: step 2/2. This chain is Phosphoribosylformylglycinamidine cyclo-ligase, found in Burkholderia pseudomallei (strain 668).